Reading from the N-terminus, the 377-residue chain is tRNA/tmRNA (uracil-C(5))-methyltransferase (377 aa).

Residues Q199, Y227, N232, E248, and D308 each contribute to the S-adenosyl-L-methionine site. The active-site Nucleophile is C333. E367 serves as the catalytic Proton acceptor.

Belongs to the class I-like SAM-binding methyltransferase superfamily. RNA M5U methyltransferase family. TrmA subfamily.

It catalyses the reaction uridine(54) in tRNA + S-adenosyl-L-methionine = 5-methyluridine(54) in tRNA + S-adenosyl-L-homocysteine + H(+). It carries out the reaction uridine(341) in tmRNA + S-adenosyl-L-methionine = 5-methyluridine(341) in tmRNA + S-adenosyl-L-homocysteine + H(+). Its function is as follows. Dual-specificity methyltransferase that catalyzes the formation of 5-methyluridine at position 54 (m5U54) in all tRNAs, and that of position 341 (m5U341) in tmRNA (transfer-mRNA). This is tRNA/tmRNA (uracil-C(5))-methyltransferase from Aeromonas hydrophila subsp. hydrophila (strain ATCC 7966 / DSM 30187 / BCRC 13018 / CCUG 14551 / JCM 1027 / KCTC 2358 / NCIMB 9240 / NCTC 8049).